The sequence spans 435 residues: rRNA methyltransferase 3A, mitochondrial (435 aa).

The N-terminal 42 residues, 1–42 (MAALMYNVSRGLVMLGERSLFQRERYQILVNSRRFLRGLRRR), are a transit peptide targeting the mitochondrion. Over residues 314–324 (KQLVSGQTENV) the composition is skewed to polar residues. Residues 314–351 (KQLVSGQTENVSSDDYSESDSDDDDDEEEDEDSLPHVK) are disordered. A compositionally biased stretch (acidic residues) spans 328 to 345 (DYSESDSDDDDDEEEDED). S-adenosyl-L-methionine is bound by residues Gly369 and Leu402.

Belongs to the class IV-like SAM-binding methyltransferase superfamily. RNA methyltransferase TrmH family.

Its subcellular location is the mitochondrion. The catalysed reaction is a uridine in rRNA + S-adenosyl-L-methionine = a 2'-O-methyluridine in rRNA + S-adenosyl-L-homocysteine + H(+). In terms of biological role, S-adenosyl-L-methionine-dependent 2'-O-ribose methyltransferase that catalyzes the formation of 2'-O-methylguanosine at position 1485 (Gm1485) in the mitochondrial large subunit ribosomal RNA (mtLSU rRNA), a conserved modification in the peptidyl transferase domain of the mtLSU rRNA. Also required for formation of 2'-O-methyluridine at position 1484 (Um1484) mediated by MRM2. In Danio rerio (Zebrafish), this protein is rRNA methyltransferase 3A, mitochondrial (mrm3a).